The following is a 511-amino-acid chain: 2-isopropylmalate synthase (511 aa).

The Pyruvate carboxyltransferase domain occupies 5-267; that stretch reads IQIFDTTLRD…ESQINLEETK (263 aa). The Mn(2+) site is built by D14, H202, H204, and N238. Residues 391–511 form a regulatory domain region; it reads QLDNLQLQYV…EYELKEGIRT (121 aa).

Belongs to the alpha-IPM synthase/homocitrate synthase family. LeuA type 1 subfamily. In terms of assembly, homodimer. Requires Mn(2+) as cofactor.

The protein resides in the cytoplasm. The catalysed reaction is 3-methyl-2-oxobutanoate + acetyl-CoA + H2O = (2S)-2-isopropylmalate + CoA + H(+). It participates in amino-acid biosynthesis; L-leucine biosynthesis; L-leucine from 3-methyl-2-oxobutanoate: step 1/4. Catalyzes the condensation of the acetyl group of acetyl-CoA with 3-methyl-2-oxobutanoate (2-ketoisovalerate) to form 3-carboxy-3-hydroxy-4-methylpentanoate (2-isopropylmalate). The sequence is that of 2-isopropylmalate synthase from Staphylococcus epidermidis (strain ATCC 35984 / DSM 28319 / BCRC 17069 / CCUG 31568 / BM 3577 / RP62A).